A 398-amino-acid chain; its full sequence is Na(+)/H(+) antiporter NhaA (398 aa).

Transmembrane regions (helical) follow at residues 9–29 (MITHPAAGGVLLFAAALAAIV), 57–77 (LSLLVLVNDGLMAVFFLAVGL), 95–115 (AFPAIAALGGMVAPAVIYSLM), 124–144 (AGWAIPAATDIAFAVGVLALL), 154–174 (VFMLALAIIDDLGAIVIIALF), 177–197 (TALEPLALAAAGAVIGIMALM), 204–224 (FLSLYLLLGAVLWGCILLSGI), 226–246 (ATLAGVVVGGLIPLTLPSTEV), 255–275 (WLQPWVVYLILPLFAFANAGI), 288–308 (FLPLGIAAGLVVGKPLGIVLF), 329–349 (IAAAAMLCGIGFTMSIFIANL), and 359–379 (IVLAKVGILSGSVIAALLGYL).

It belongs to the NhaA Na(+)/H(+) (TC 2.A.33) antiporter family.

The protein localises to the cell inner membrane. The enzyme catalyses Na(+)(in) + 2 H(+)(out) = Na(+)(out) + 2 H(+)(in). In terms of biological role, na(+)/H(+) antiporter that extrudes sodium in exchange for external protons. In Sodalis glossinidius (strain morsitans), this protein is Na(+)/H(+) antiporter NhaA.